A 303-amino-acid chain; its full sequence is MNKIAVIGKVFVDIKGTSFAPLHKDAKNVGDITFSNGGTGRNVAQNLAVLGNEVRFISTVTNDQIGVGVLDELKSYGANVDHVEMLEDHGMGMWLAVMDNEGDLQTSISKQPDAKLLEEAILRQSIYALDGVDAVAIDLDLSVTVLERLIHLCRKMELPLFGVCGHLSVIERNRHLLQGFTGFICSREEAEILSDLSIVTVEDAIHVANELAKKGAPFTVVTMSELGAVYVDRRTATSGHVGTKKVKVVDSTGAGDSFFSAVLSELTQEKSAEEALKLGMKVAAEVIASTENGLVPEMLDALQ.

The protein belongs to the carbohydrate kinase PfkB family. Homodimer. It depends on Mg(2+) as a cofactor.

It carries out the reaction guanosine + ATP = GMP + ADP + H(+). The catalysed reaction is inosine + ATP = IMP + ADP + H(+). Its pathway is purine metabolism; IMP biosynthesis via salvage pathway; IMP from inosine: step 1/1. It participates in purine metabolism; GMP biosynthesis via salvage pathway. Kinase activity is stimulated by pyrimidine nucleotides, especially CMP and CTP, and inhibited by AMP, ADP and GMP. Activity is stimulated by potassium or ammonium ions. In terms of biological role, catalyzes the phosphorylation of guanosine and inosine to GMP and IMP, respectively. Can also use deoxyguanosine. Shows a strong preference for guanosine. dATP, GTP and dGTP can serve as phosphate donors. In Exiguobacterium acetylicum (Brevibacterium acetylicum), this protein is Guanosine-inosine kinase.